The chain runs to 200 residues: Prophage tail fiber assembly protein homolog TfaE (200 aa).

Belongs to the tfa family.

In Escherichia coli (strain K12), this protein is Prophage tail fiber assembly protein homolog TfaE (tfaE).